Here is a 329-residue protein sequence, read N- to C-terminus: (+)-eremophilene synthase (329 aa).

2 residues coordinate Mg(2+): aspartate 91 and glutamate 96. The DDXXD motif motif lies at 91-95 (DDAYD). Arginine 185 serves as a coordination point for substrate. 2 residues coordinate Mg(2+): asparagine 231 and serine 235. Lysine 238 serves as a coordination point for substrate. Residue glutamate 239 participates in Mg(2+) binding. 317-318 (RY) serves as a coordination point for substrate.

Belongs to the terpene synthase family. It depends on Mg(2+) as a cofactor.

It catalyses the reaction (2E,6E)-farnesyl diphosphate = (+)-eremophilene + diphosphate. Its pathway is secondary metabolite biosynthesis; terpenoid biosynthesis. In terms of biological role, catalyzes the conversion of (2E,6E)-farnesyl diphosphate (FPP) to yield the bicyclic sesquiterpene eremophilene via a 1,10-cyclization, which requires the abstraction of the pyrophosphate from FPP to yield the (E,E)-germacradienyl cation. The only accepted substrate is farnesyl diphosphate (FPP). The protein is (+)-eremophilene synthase of Sorangium cellulosum (strain So ce56) (Polyangium cellulosum (strain So ce56)).